Reading from the N-terminus, the 500-residue chain is L-arabinose isomerase (500 aa).

4 residues coordinate Mn(2+): Glu306, Glu333, His350, and His450.

The protein belongs to the arabinose isomerase family. As to quaternary structure, homohexamer. Requires Mn(2+) as cofactor.

The enzyme catalyses beta-L-arabinopyranose = L-ribulose. Its pathway is carbohydrate degradation; L-arabinose degradation via L-ribulose; D-xylulose 5-phosphate from L-arabinose (bacterial route): step 1/3. Catalyzes the conversion of L-arabinose to L-ribulose. This is L-arabinose isomerase from Klebsiella pneumoniae (strain 342).